A 207-amino-acid polypeptide reads, in one-letter code: rRNA N(6)-adenosine-methyltransferase METTL5 (207 aa).

Residues glutamine 25, threonine 28, glycine 56, cysteine 59, valine 61, aspartate 78, and 105-106 (DV) contribute to the S-adenosyl-L-methionine site.

Belongs to the methyltransferase superfamily. PrmA family.

The protein resides in the nucleus. The protein localises to the presynapse. It is found in the postsynapse. It carries out the reaction adenosine(1832) in 18S rRNA + S-adenosyl-L-methionine = N(6)-methyladenosine(1832) in 18S rRNA + S-adenosyl-L-homocysteine + H(+). Its activity is regulated as follows. rRNA N6-adenosine-methyltransferase activity is inhibited by zinc. Its function is as follows. Catalytic subunit of a heterodimer with TRMT112, which specifically methylates the 6th position of adenine in position 1832 of 18S rRNA. N6-methylation of adenine(1832) in 18S rRNA resides in the decoding center of 18S rRNA and is required for translation and embryonic stem cells (ESCs) pluripotency and differentiation. The sequence is that of rRNA N(6)-adenosine-methyltransferase METTL5 from Danio rerio (Zebrafish).